Here is a 166-residue protein sequence, read N- to C-terminus: Putative signal peptidase complex catalytic subunit SEC11B (166 aa).

Residues 1-6 (MNKWRL) are Cytoplasmic-facing. Residues 7–24 (YYQVLNFGMIVSSALMIW) form a helical; Signal-anchor for type II membrane protein membrane-spanning segment. Topologically, residues 25-166 (KGLMVITGSE…LGLFVLVHRE (142 aa)) are extracellular. Serine 43 is an active-site residue.

The protein belongs to the peptidase S26B family.

The protein localises to the membrane. The enzyme catalyses Cleavage of hydrophobic, N-terminal signal or leader sequences from secreted and periplasmic proteins.. Its function is as follows. Putative component of some signal peptidase complex which removes signal peptides from nascent proteins as they are translocated into the lumen of the endoplasmic reticulum. This Homo sapiens (Human) protein is Putative signal peptidase complex catalytic subunit SEC11B (SEC11B).